The following is a 145-amino-acid chain: Transcription antitermination protein NusB (145 aa).

This sequence belongs to the NusB family.

Involved in transcription antitermination. Required for transcription of ribosomal RNA (rRNA) genes. Binds specifically to the boxA antiterminator sequence of the ribosomal RNA (rrn) operons. The protein is Transcription antitermination protein NusB of Geotalea uraniireducens (strain Rf4) (Geobacter uraniireducens).